The following is a 568-amino-acid chain: Small ribosomal subunit protein bS1 (568 aa).

S1 motif domains lie at 27-93 (GYVA…LSRE), 111-177 (GERV…VSRR), 198-266 (GQVV…LGMK), 283-353 (GKKI…LGLK), 370-440 (GTEV…LGIK), and 459-530 (NAVV…LSIK).

The protein belongs to the bacterial ribosomal protein bS1 family.

In terms of biological role, binds mRNA; thus facilitating recognition of the initiation point. It is needed to translate mRNA with a short Shine-Dalgarno (SD) purine-rich sequence. The sequence is that of Small ribosomal subunit protein bS1 (rpsA) from Rhizobium meliloti (strain 1021) (Ensifer meliloti).